The primary structure comprises 2207 residues: Genome polyprotein (2207 aa).

The N-myristoyl glycine; by host moiety is linked to residue glycine 2. At 2-1518 (GAQVSSQKVG…NINRAMTILQ (1517 aa)) the chain is on the cytoplasmic side. The tract at residues 579–599 (GLGDLIEGVVEGVTRNALTPL) is amphipathic alpha-helix. Over residues 597 to 613 (TPLTPANNLPDTQSSGP) the composition is skewed to polar residues. 2 disordered regions span residues 597 to 620 (TPLT…KETP) and 628 to 647 (GATN…VIQK). Active-site for protease 2A activity residues include histidine 899 and aspartate 917. 2 residues coordinate Zn(2+): cysteine 934 and cysteine 936. Cysteine 988 functions as the For protease 2A activity in the catalytic mechanism. Residues cysteine 994 and histidine 996 each coordinate Zn(2+). Positions 1126–1198 (GDSWLKKFTE…HQSCPSQEHQ (73 aa)) are membrane-binding. The segment at 1126-1264 (GDSWLKKFTE…SPGTGKSVAT (139 aa)) is oligomerization. The interval 1147 to 1151 (SNKIS) is RNA-binding. An SF3 helicase domain is found at 1230 to 1386 (EHTINNYVQF…SEYSRDGKLN (157 aa)). Position 1254–1261 (1254–1261 (GSPGTGKS)) interacts with ATP. Zn(2+) is bound by residues cysteine 1394, cysteine 1397, cysteine 1406, and cysteine 1411. A C4-type zinc finger spans residues 1394-1411 (CKNCHHPANFKRCCPLVC). Residues 1438-1445 (ERNRRSSI) form an RNA-binding region. The tract at residues 1449-1454 (MEALFQ) is oligomerization. The stretch at 1519-1534 (AVTTFAAVAGVVYVMY) is an intramembrane region. Residues 1535 to 2207 (KLFAGHQGAY…TLYRRWLDSF (673 aa)) are Cytoplasmic-facing. O-(5'-phospho-RNA)-tyrosine is present on tyrosine 1544. A Peptidase C3 domain is found at 1564–1742 (GPGFDYAVAM…FAAALKRSYF (179 aa)). Residues histidine 1603, glutamate 1634, and cysteine 1710 each act as for protease 3C activity in the active site. Residues 1973–2088 (EKLFAFDYTG…SYPHEVDASL (116 aa)) enclose the RdRp catalytic domain. Mg(2+) is bound by residues aspartate 1979 and aspartate 2074.

Belongs to the picornaviruses polyprotein family. As to quaternary structure, interacts with capsid protein VP1 and capsid protein VP3 to form heterotrimeric protomers. In terms of assembly, interacts with capsid protein VP0, and capsid protein VP3 to form heterotrimeric protomers. Interacts with human PVR. Five protomers subsequently associate to form pentamers which serve as building blocks for the capsid. Interacts with capsid protein VP2, capsid protein VP3 and capsid protein VP4 following cleavage of capsid protein VP0. Interacts with capsid protein VP1 and capsid protein VP3 in the mature capsid. As to quaternary structure, interacts with capsid protein VP0 and capsid protein VP1 to form heterotrimeric protomers. Five protomers subsequently associate to form pentamers which serve as building blocks for the capsid. Interacts with capsid protein VP4 in the mature capsid. Interacts with protein 2C; this interaction may be important for virion morphogenesis. In terms of assembly, interacts with capsid protein VP1 and capsid protein VP3. Homodimer. As to quaternary structure, homohexamer; forms a hexameric ring structure with 6-fold symmetry characteristic of AAA+ ATPases. Interacts (via N-terminus) with host RTN3 (via reticulon domain); this interaction is important for viral replication. Interacts with capsid protein VP3; this interaction may be important for virion morphogenesis. In terms of assembly, interacts with protein 3CD. Homodimer. Interacts with host GBF1. Interacts (via GOLD domain) with host ACBD3 (via GOLD domain); this interaction allows the formation of a viral protein 3A/ACBD3 heterotetramer with a 2:2 stoichiometry, which will stimulate the recruitment of host PI4KB in order to synthesize PI4P at the viral RNA replication sites. As to quaternary structure, interacts with RNA-directed RNA polymerase. In terms of assembly, interacts with protein 3AB and with RNA-directed RNA polymerase. Interacts with Viral protein genome-linked and with protein 3CD. Requires Mg(2+) as cofactor. In terms of processing, specific enzymatic cleavages in vivo by the viral proteases yield processing intermediates and the mature proteins. Myristoylation is required for the formation of pentamers during virus assembly. Further assembly of 12 pentamers and a molecule of genomic RNA generates the provirion. Post-translationally, during virion maturation, immature virions are rendered infectious following cleavage of VP0 into VP4 and VP2. This maturation seems to be an autocatalytic event triggered by the presence of RNA in the capsid and it is followed by a conformational change infectious virion. In terms of processing, myristoylation is required during RNA encapsidation and formation of the mature virus particle. VPg is uridylylated by the polymerase into VPg-pUpU. This acts as a nucleotide-peptide primer for the genomic RNA replication.

Its subcellular location is the virion. The protein localises to the host cytoplasm. It localises to the host cytoplasmic vesicle membrane. It is found in the host nucleus. The catalysed reaction is a ribonucleoside 5'-triphosphate + H2O = a ribonucleoside 5'-diphosphate + phosphate + H(+). It catalyses the reaction Selective cleavage of Tyr-|-Gly bond in the picornavirus polyprotein.. The enzyme catalyses RNA(n) + a ribonucleoside 5'-triphosphate = RNA(n+1) + diphosphate. It carries out the reaction Selective cleavage of Gln-|-Gly bond in the poliovirus polyprotein. In other picornavirus reactions Glu may be substituted for Gln, and Ser or Thr for Gly.. With respect to regulation, replication or transcription is subject to high level of random mutations by the nucleotide analog ribavirin. Functionally, forms an icosahedral capsid of pseudo T=3 symmetry with capsid proteins VP2 and VP3. The capsid is 300 Angstroms in diameter, composed of 60 copies of each capsid protein and enclosing the viral positive strand RNA genome. Capsid protein VP1 mainly forms the vertices of the capsid. Capsid protein VP1 interacts with host cell receptor PVR to provide virion attachment to target host cells. This attachment induces virion internalization predominantly through clathrin- and caveolin-independent endocytosis in Hela cells and through caveolin-mediated endocytosis in brain microvascular endothelial cells. Tyrosine kinases are probably involved in the entry process. Virus binding to PVR induces increased junctional permeability and rearrangement of junctional proteins. Modulation of endothelial tight junctions, as well as cytolytic infection of endothelial cells themselves, may result in loss of endothelial integrity which may help the virus to reach the CNS. After binding to its receptor, the capsid undergoes conformational changes. Capsid protein VP1 N-terminus (that contains an amphipathic alpha-helix) and capsid protein VP4 are externalized. Together, they shape a pore in the host membrane through which viral genome is translocated to host cell cytoplasm. In terms of biological role, forms an icosahedral capsid of pseudo T=3 symmetry with capsid proteins VP2 and VP3. The capsid is 300 Angstroms in diameter, composed of 60 copies of each capsid protein and enclosing the viral positive strand RNA genome. Its function is as follows. Lies on the inner surface of the capsid shell. After binding to the host receptor, the capsid undergoes conformational changes. Capsid protein VP4 is released, Capsid protein VP1 N-terminus is externalized, and together, they shape a pore in the host membrane through which the viral genome is translocated into the host cell cytoplasm. Component of immature procapsids, which is cleaved into capsid proteins VP4 and VP2 after maturation. Allows the capsid to remain inactive before the maturation step. Functionally, cysteine protease that cleaves viral polyprotein and specific host proteins. It is responsible for the autocatalytic cleavage between the P1 and P2 regions, which is the first cleavage occurring in the polyprotein. Also cleaves the host translation initiation factor EIF4G1, in order to shut down the capped cellular mRNA translation. Inhibits the host nucleus-cytoplasm protein and RNA trafficking by cleaving host members of the nuclear pores including NUP98, NUP62 and NUP153. Counteracts stress granule formation probably by antagonizing its assembly or promoting its dissassembly. Cleaves and inhibits host IFIH1/MDA5, thereby inhibiting the type-I IFN production and the establishment of the antiviral state. Cleaves and inhibits host MAVS, thereby inhibiting the type-I IFN production and the establishment of the antiviral state. In terms of biological role, plays an essential role in the virus replication cycle by acting as a viroporin. Creates a pore in the host endoplasmic reticulum and as a consequence releases Ca2+ in the cytoplasm of infected cell. In turn, high levels of cytoplasmic calcium may trigger membrane trafficking and transport of viral ER-associated proteins to viroplasms, sites of viral genome replication. Its function is as follows. Induces and associates with structural rearrangements of intracellular membranes. Displays RNA-binding, nucleotide binding and NTPase activities. May play a role in virion morphogenesis and viral RNA encapsidation by interacting with the capsid protein VP3. Localizes the viral replication complex to the surface of membranous vesicles. Together with protein 3CD binds the Cis-Active RNA Element (CRE) which is involved in RNA synthesis initiation. Acts as a cofactor to stimulate the activity of 3D polymerase, maybe through a nucleid acid chaperone activity. Functionally, localizes the viral replication complex to the surface of membranous vesicles. It inhibits host cell endoplasmic reticulum-to-Golgi apparatus transport and causes the disassembly of the Golgi complex, possibly through GBF1 interaction. This would result in depletion of MHC, trail receptors and IFN receptors at the host cell surface. Plays an essential role in viral RNA replication by recruiting ACBD3 and PI4KB at the viral replication sites, thereby allowing the formation of the rearranged membranous structures where viral replication takes place. In terms of biological role, acts as a primer for viral RNA replication and remains covalently bound to viral genomic RNA. VPg is uridylylated prior to priming replication into VPg-pUpU. The oriI viral genomic sequence may act as a template for this. The VPg-pUpU is then used as primer on the genomic RNA poly(A) by the RNA-dependent RNA polymerase to replicate the viral genome. During genome replication, the VPg-RNA linkage is removed by the host TDP2, thereby accelerating replication. During the late stage of the replication cycle, host TDP2 is excluded from sites of viral RNA synthesis and encapsidation, allowing for the generation of progeny virions. Its function is as follows. Involved in the viral replication complex and viral polypeptide maturation. It exhibits protease activity with a specificity and catalytic efficiency that is different from protease 3C. Protein 3CD lacks polymerase activity. Protein 3CD binds to the 5'UTR of the viral genome. Major viral protease that mediates proteolytic processing of the polyprotein. Cleaves host EIF5B, contributing to host translation shutoff. Also cleaves host PABPC1, contributing to host translation shutoff. Cleaves host RIGI and thus contributes to the inhibition of type I interferon production. Cleaves host NLRP1, triggers host N-glycine-mediated degradation of the autoinhibitory NLRP1 N-terminal fragment. Inhibits the integrated stress response (ISR) in the infected cell by cleaving host G3BP1. Stress granule formation is thus inhibited, which allows protein synthesis and viral replication. Functionally, replicates the viral genomic RNA on the surface of intracellular membranes. May form linear arrays of subunits that propagate along a strong head-to-tail interaction called interface-I. Covalently attaches UMP to a tyrosine of VPg, which is used to prime RNA synthesis. The positive stranded RNA genome is first replicated at virus induced membranous vesicles, creating a dsRNA genomic replication form. This dsRNA is then used as template to synthesize positive stranded RNA genomes. ss(+)RNA genomes are either translated, replicated or encapsidated. The protein is Genome polyprotein of Homo sapiens (Human).